Consider the following 447-residue polypeptide: Glyceraldehyde-3-phosphate dehydrogenase GAPB, chloroplastic (447 aa).

A chloroplast-targeting transit peptide spans 1–80; it reads MATHAALAVS…STPVRGETVA (80 aa). Residues 91 to 92, D115, and R160 contribute to the NADP(+) site; that span reads RI. Residues 234 to 236, T265, R280, 293 to 294, and R316 each bind D-glyceraldehyde 3-phosphate; these read SCT and TG. The active-site Nucleophile is the C235. N399 lines the NADP(+) pocket.

The protein belongs to the glyceraldehyde-3-phosphate dehydrogenase family. As to quaternary structure, tetramer of either four A chains (GAPDH 2) or two A and two B chains (GAPDH 1). In terms of tissue distribution, expressed in leaves and stems.

Its subcellular location is the plastid. It is found in the chloroplast membrane. The protein resides in the chloroplast stroma. It carries out the reaction D-glyceraldehyde 3-phosphate + phosphate + NADP(+) = (2R)-3-phospho-glyceroyl phosphate + NADPH + H(+). It participates in carbohydrate biosynthesis; Calvin cycle. Functionally, involved in the photosynthetic reductive pentose phosphate pathway (Calvin-Benson cycle). Catalyzes the reduction of 1,3-diphosphoglycerate by NADPH. The sequence is that of Glyceraldehyde-3-phosphate dehydrogenase GAPB, chloroplastic (GAPB) from Arabidopsis thaliana (Mouse-ear cress).